Reading from the N-terminus, the 264-residue chain is MICOS complex subunit MIC27 (264 aa).

A mitochondrion-targeting transit peptide spans 1–27; that stretch reads MAALRMGKLTTMPTGLIYASISVHVAK. Residues 28-110 are Mitochondrial intermembrane-facing; that stretch reads EEESKKQLVK…YVYLKNPPRD (83 aa). The helical transmembrane segment at 111 to 129 threads the bilayer; sequence FLPKIGVITVSGLAGFISA. The Mitochondrial matrix segment spans residues 130-137; it reads RKGSRFKR. A helical membrane pass occupies residues 138–155; sequence IAYPLGLATLGATVCYPV. The Mitochondrial intermembrane portion of the chain corresponds to 156–264; it reads QSVIIAKVAG…EDIDMYSTRS (109 aa). Positions 189 to 198 are enriched in basic and acidic residues; that stretch reads KLPEHKEKTK. Residues 189 to 264 form a disordered region; the sequence is KLPEHKEKTK…EDIDMYSTRS (76 aa). Residues 223–238 are compositionally biased toward low complexity; it reads AELSSETKTKSTSGAT. Positions 245–256 are enriched in basic and acidic residues; that stretch reads KLMDHGQSHPED.

The protein belongs to the apolipoprotein O/MICOS complex subunit Mic27 family. In terms of assembly, component of the mitochondrial contact site and cristae organizing system (MICOS) complex, composed of at least MICOS10/MIC10, CHCHD3/MIC19, CHCHD6/MIC25, APOOL/MIC27, IMMT/MIC60, APOO/MIC23/MIC26 and QIL1/MIC13. This complex was also known under the names MINOS or MitOS complex. The MICOS complex associates with mitochondrial outer membrane proteins SAMM50, MTX1 and MTX2 (together described as components of the mitochondrial outer membrane sorting assembly machinery (SAM) complex) and DNAJC11, mitochondrial inner membrane protein TMEM11 and with HSPA9. The MICOS and SAM complexes together with DNAJC11 are part of a large protein complex spanning both membranes termed the mitochondrial intermembrane space bridging (MIB) complex. Interacts with MICOS10/MIC10, IMMT/MIC60 and APOO/MIC23/MIC26.

The protein localises to the mitochondrion inner membrane. The protein resides in the mitochondrion. Functionally, component of the MICOS complex, a large protein complex of the mitochondrial inner membrane that plays crucial roles in the maintenance of crista junctions, inner membrane architecture, and formation of contact sites to the outer membrane. Specifically binds to cardiolipin (in vitro) but not to the precursor lipid phosphatidylglycerol. Plays a crucial role in crista junction formation and mitochondrial function. This is MICOS complex subunit MIC27 (APOL) from Bos taurus (Bovine).